The primary structure comprises 248 residues: Pyridoxine 5'-phosphate synthase (248 aa).

Position 12 (Asn-12) interacts with 3-amino-2-oxopropyl phosphate. Residue 14–15 (DH) participates in 1-deoxy-D-xylulose 5-phosphate binding. Arg-23 is a 3-amino-2-oxopropyl phosphate binding site. Catalysis depends on His-48, which acts as the Proton acceptor. The 1-deoxy-D-xylulose 5-phosphate site is built by Arg-50 and His-55. The active-site Proton acceptor is Glu-75. Thr-105 provides a ligand contact to 1-deoxy-D-xylulose 5-phosphate. Catalysis depends on His-196, which acts as the Proton donor. 3-amino-2-oxopropyl phosphate contacts are provided by residues Gly-197 and 218-219 (GH).

This sequence belongs to the PNP synthase family. Homooctamer; tetramer of dimers.

Its subcellular location is the cytoplasm. It carries out the reaction 3-amino-2-oxopropyl phosphate + 1-deoxy-D-xylulose 5-phosphate = pyridoxine 5'-phosphate + phosphate + 2 H2O + H(+). Its pathway is cofactor biosynthesis; pyridoxine 5'-phosphate biosynthesis; pyridoxine 5'-phosphate from D-erythrose 4-phosphate: step 5/5. Functionally, catalyzes the complicated ring closure reaction between the two acyclic compounds 1-deoxy-D-xylulose-5-phosphate (DXP) and 3-amino-2-oxopropyl phosphate (1-amino-acetone-3-phosphate or AAP) to form pyridoxine 5'-phosphate (PNP) and inorganic phosphate. The chain is Pyridoxine 5'-phosphate synthase from Pseudomonas aeruginosa (strain UCBPP-PA14).